The chain runs to 330 residues: Ribose-phosphate pyrophosphokinase (330 aa).

Residue aspartate 55–glutamate 57 participates in ATP binding. Mg(2+)-binding residues include histidine 148 and aspartate 187. The active site involves lysine 211. D-ribose 5-phosphate is bound by residues arginine 213, aspartate 237, and aspartate 241–threonine 245.

This sequence belongs to the ribose-phosphate pyrophosphokinase family. Class I subfamily. Homohexamer. Mg(2+) is required as a cofactor.

Its subcellular location is the cytoplasm. The catalysed reaction is D-ribose 5-phosphate + ATP = 5-phospho-alpha-D-ribose 1-diphosphate + AMP + H(+). It functions in the pathway metabolic intermediate biosynthesis; 5-phospho-alpha-D-ribose 1-diphosphate biosynthesis; 5-phospho-alpha-D-ribose 1-diphosphate from D-ribose 5-phosphate (route I): step 1/1. Functionally, involved in the biosynthesis of the central metabolite phospho-alpha-D-ribosyl-1-pyrophosphate (PRPP) via the transfer of pyrophosphoryl group from ATP to 1-hydroxyl of ribose-5-phosphate (Rib-5-P). This chain is Ribose-phosphate pyrophosphokinase, found in Nostoc sp. (strain PCC 7120 / SAG 25.82 / UTEX 2576).